The sequence spans 489 residues: Lysine--tRNA ligase (489 aa).

The Mg(2+) site is built by glutamate 399 and glutamate 406.

Belongs to the class-II aminoacyl-tRNA synthetase family. As to quaternary structure, homodimer. Requires Mg(2+) as cofactor.

It localises to the cytoplasm. It catalyses the reaction tRNA(Lys) + L-lysine + ATP = L-lysyl-tRNA(Lys) + AMP + diphosphate. The sequence is that of Lysine--tRNA ligase (lysS) from Mycoplasma pneumoniae (strain ATCC 29342 / M129 / Subtype 1) (Mycoplasmoides pneumoniae).